The chain runs to 342 residues: Dihydroorotate dehydrogenase (quinone) (342 aa).

Residues 60 to 64 (AGLDK) and threonine 84 contribute to the FMN site. Lysine 64 contributes to the substrate binding site. 109 to 113 (NRMGF) serves as a coordination point for substrate. FMN-binding residues include asparagine 137 and asparagine 170. Asparagine 170 lines the substrate pocket. Residue serine 173 is the Nucleophile of the active site. Asparagine 175 contributes to the substrate binding site. FMN-binding residues include lysine 215 and threonine 243. Residue 244-245 (NT) coordinates substrate. Residues glycine 266, glycine 295, and 316 to 317 (YS) contribute to the FMN site.

This sequence belongs to the dihydroorotate dehydrogenase family. Type 2 subfamily. Monomer. It depends on FMN as a cofactor.

The protein resides in the cell membrane. It carries out the reaction (S)-dihydroorotate + a quinone = orotate + a quinol. It participates in pyrimidine metabolism; UMP biosynthesis via de novo pathway; orotate from (S)-dihydroorotate (quinone route): step 1/1. Catalyzes the conversion of dihydroorotate to orotate with quinone as electron acceptor. The protein is Dihydroorotate dehydrogenase (quinone) of Nitrosomonas eutropha (strain DSM 101675 / C91 / Nm57).